The following is a 103-amino-acid chain: Insulin (103 aa).

Residues 1 to 20 form the signal peptide; it reads IQSLPLLALLALSGPGTSHA. 3 disulfides stabilise this stretch: C27–C89, C39–C102, and C88–C93. The propeptide at 53–80 is c peptide; it reads DAEHPLVNGPLHGEVGDLPFQQEEFEKV.

Belongs to the insulin family. In terms of assembly, heterodimer of a B chain and an A chain linked by two disulfide bonds.

The protein resides in the secreted. Its function is as follows. Insulin decreases blood glucose concentration. It increases cell permeability to monosaccharides, amino acids and fatty acids. It accelerates glycolysis, the pentose phosphate cycle, and glycogen synthesis in liver. The protein is Insulin (INS) of Selasphorus rufus (Rufous hummingbird).